Consider the following 507-residue polypeptide: ATP synthase subunit alpha (507 aa).

Residue 170 to 177 (GDRQTGKT) coordinates ATP.

This sequence belongs to the ATPase alpha/beta chains family. As to quaternary structure, F-type ATPases have 2 components, CF(1) - the catalytic core - and CF(0) - the membrane proton channel. CF(1) has five subunits: alpha(3), beta(3), gamma(1), delta(1), epsilon(1). CF(0) has three main subunits: a(1), b(2) and c(9-12). The alpha and beta chains form an alternating ring which encloses part of the gamma chain. CF(1) is attached to CF(0) by a central stalk formed by the gamma and epsilon chains, while a peripheral stalk is formed by the delta and b chains.

The protein localises to the cell inner membrane. The enzyme catalyses ATP + H2O + 4 H(+)(in) = ADP + phosphate + 5 H(+)(out). Produces ATP from ADP in the presence of a proton gradient across the membrane. The alpha chain is a regulatory subunit. In Thermosipho melanesiensis (strain DSM 12029 / CIP 104789 / BI429), this protein is ATP synthase subunit alpha.